The following is a 700-amino-acid chain: uncharacterized protein (700 aa).

[4Fe-4S] cluster contacts are provided by C307, C310, C314, and C558.

The protein belongs to the AOR/FOR family. [4Fe-4S] cluster is required as a cofactor. It depends on Mo-molybdopterin as a cofactor. Tungstopterin serves as cofactor.

This is an uncharacterized protein from Escherichia coli (strain K12).